Consider the following 283-residue polypeptide: Bis(5'-nucleosyl)-tetraphosphatase, symmetrical (283 aa).

Belongs to the Ap4A hydrolase family.

The enzyme catalyses P(1),P(4)-bis(5'-adenosyl) tetraphosphate + H2O = 2 ADP + 2 H(+). Its function is as follows. Hydrolyzes diadenosine 5',5'''-P1,P4-tetraphosphate to yield ADP. In Pseudomonas fluorescens (strain SBW25), this protein is Bis(5'-nucleosyl)-tetraphosphatase, symmetrical.